The chain runs to 158 residues: MPRERGEKVVATNRKARHDYTIESTYEAGLVLTGTEVKSLRQGRASLVDGYAFVDAGEAWLDAVHIPEYNQGTWNNHPVRRKRKLLLHKEQILKIHSKVKEGGYTVVPLQLYFVDGRAKVELAIAKGKKEYDKRQTLRERQDKREADRAMSSHRRLGE.

The segment at tyrosine 131 to glutamate 158 is disordered.

The protein belongs to the SmpB family.

It localises to the cytoplasm. In terms of biological role, required for rescue of stalled ribosomes mediated by trans-translation. Binds to transfer-messenger RNA (tmRNA), required for stable association of tmRNA with ribosomes. tmRNA and SmpB together mimic tRNA shape, replacing the anticodon stem-loop with SmpB. tmRNA is encoded by the ssrA gene; the 2 termini fold to resemble tRNA(Ala) and it encodes a 'tag peptide', a short internal open reading frame. During trans-translation Ala-aminoacylated tmRNA acts like a tRNA, entering the A-site of stalled ribosomes, displacing the stalled mRNA. The ribosome then switches to translate the ORF on the tmRNA; the nascent peptide is terminated with the 'tag peptide' encoded by the tmRNA and targeted for degradation. The ribosome is freed to recommence translation, which seems to be the essential function of trans-translation. The protein is SsrA-binding protein of Clavibacter michiganensis subsp. michiganensis (strain NCPPB 382).